The primary structure comprises 120 residues: Cell cycle protein GpsB (120 aa).

Residues 32–68 are a coiled coil; sequence LDDIIKDYETYAALVKELREENRRLKEELAAKPVEKA. A disordered region spans residues 63 to 88; sequence KPVEKAPVQPTQPVQSTQATQSTVES. Residues 68-86 are compositionally biased toward low complexity; that stretch reads APVQPTQPVQSTQATQSTV.

It belongs to the GpsB family. Forms polymers through the coiled coil domains. Interacts with PBP1, MreC and EzrA.

It is found in the cytoplasm. Its function is as follows. Divisome component that associates with the complex late in its assembly, after the Z-ring is formed, and is dependent on DivIC and PBP2B for its recruitment to the divisome. Together with EzrA, is a key component of the system that regulates PBP1 localization during cell cycle progression. Its main role could be the removal of PBP1 from the cell pole after pole maturation is completed. Also contributes to the recruitment of PBP1 to the division complex. Not essential for septum formation. This Streptococcus sanguinis (strain SK36) protein is Cell cycle protein GpsB.